The primary structure comprises 266 residues: Large ribosomal subunit protein uL2m (266 aa).

This sequence belongs to the universal ribosomal protein uL2 family.

Its subcellular location is the mitochondrion. The chain is Large ribosomal subunit protein uL2m (mrpl2) from Dictyostelium discoideum (Social amoeba).